Reading from the N-terminus, the 494-residue chain is UDP-N-acetylmuramate--L-alanine ligase (494 aa).

122 to 128 (GTHGKTT) contributes to the ATP binding site.

It belongs to the MurCDEF family.

The protein resides in the cytoplasm. It catalyses the reaction UDP-N-acetyl-alpha-D-muramate + L-alanine + ATP = UDP-N-acetyl-alpha-D-muramoyl-L-alanine + ADP + phosphate + H(+). The protein operates within cell wall biogenesis; peptidoglycan biosynthesis. Cell wall formation. In Mycobacterium bovis (strain ATCC BAA-935 / AF2122/97), this protein is UDP-N-acetylmuramate--L-alanine ligase.